A 223-amino-acid polypeptide reads, in one-letter code: Glutathione S-transferase alpha I (223 aa).

M1 is subject to N-acetylmethionine. The residue at position 2 (A2) is an N-acetylalanine; in Glutathione S-transferase alpha I, N-terminally processed. Residues 3-83 form the GST N-terminal domain; sequence RKPLLHYFNG…YVANKHNLYG (81 aa). N6-succinyllysine is present on K4. Glutathione-binding positions include Y9, R45, 54–55, and 67–68; these read QV and QT. Residues 85 to 208 enclose the GST C-terminal domain; the sequence is DMKERALIDM…QPGSQRKPPM (124 aa).

This sequence belongs to the GST superfamily. Alpha family. As to quaternary structure, homodimer or heterodimer of GSTA1 and GSTA2. As to expression, liver and lung.

Its subcellular location is the cytoplasm. It carries out the reaction RX + glutathione = an S-substituted glutathione + a halide anion + H(+). The catalysed reaction is prostaglandin A2 + glutathione = prostaglandin A2-S-(R)-glutathione. It catalyses the reaction prostaglandin J2 + glutathione = prostaglandin J2-S-(R)-glutathione. The enzyme catalyses (13S)-hydroperoxy-(9Z,11E)-octadecadienoate + 2 glutathione = (13S)-hydroxy-(9Z,11E)-octadecadienoate + glutathione disulfide + H2O. It carries out the reaction androst-5-ene-3,17-dione = androst-4-ene-3,17-dione. In terms of biological role, glutathione S-transferase that catalyzes the nucleophilic attack of the sulfur atom of glutathione on the electrophilic groups of a wide range of exogenous and endogenous compounds. Involved in the formation of glutathione conjugates of both prostaglandin A2 (PGA2) and prostaglandin J2 (PGJ2). It also catalyzes the isomerization of D5-androstene-3,17-dione (AD) into D4-androstene-3,17-dione and may therefore play an important role in hormone biosynthesis. Through its glutathione-dependent peroxidase activity toward the fatty acid hydroperoxide (13S)-hydroperoxy-(9Z,11E)-octadecadienoate/13-HPODE it is also involved in the metabolism of oxidized linoleic acid. This is Glutathione S-transferase alpha I from Oryctolagus cuniculus (Rabbit).